Consider the following 484-residue polypeptide: MANKIRVRYAPSPTGLLHIGNARTALFNYLYARHHGGDFVIRIEDTDRKRHVEDGERSQLENLRWLGMDWDESPETHENYRQSERLELYQRYIDQLLAEGKAYKSYVTEEELAAERERQELAGETPRYINEFIGMSETEKEAYIAEREASGIIPTVRLAVNESGIYKWTDMVKGDIEFEGSNIGGDWVIQKKDGYPTYNFAVVIDDHDMQISHVIRGDDHIANTPKQLMVYEALGWEAPQFGHMTLIINSETGKKLSKRDTNTLQFIEDYRKKGYMSEAVFNFIALLGWNPGGEEEIFSREQLINLFDENRLSKSPAAFDQKKMDWMSNDYLKNADFESVFALCKPFLEEAGRLTDKAEKLVELYKPQLKSADEIVPLTDLFFADFPELTEAEKEVMAAETVPTVLSAFKEKLVSLSDEEFTRDTIFPQIKAVQKETGIKGKNLFMPIRIAVSGEMHGPELPDTIYLLGKEKSVQHIDNMLAKL.

Positions 11–21 match the 'HIGH' region motif; the sequence is PSPTGLLHIGN. The 'KMSKS' region motif lies at 255 to 259; that stretch reads KLSKR. Residue Lys258 participates in ATP binding.

Belongs to the class-I aminoacyl-tRNA synthetase family. Glutamate--tRNA ligase type 1 subfamily. Monomer.

The protein localises to the cytoplasm. It catalyses the reaction tRNA(Glu) + L-glutamate + ATP = L-glutamyl-tRNA(Glu) + AMP + diphosphate. Catalyzes the attachment of glutamate to tRNA(Glu) in a two-step reaction: glutamate is first activated by ATP to form Glu-AMP and then transferred to the acceptor end of tRNA(Glu). The protein is Glutamate--tRNA ligase of Streptococcus agalactiae serotype III (strain NEM316).